Reading from the N-terminus, the 103-residue chain is Cystatin-A (103 aa).

Met1 is subject to N-acetylmethionine. The Secondary area of contact motif lies at 52–56 (QVVAG).

Belongs to the cystatin family.

Its subcellular location is the cytoplasm. In terms of biological role, this is an intracellular thiol proteinase inhibitor. The sequence is that of Cystatin-A (Csta) from Rattus norvegicus (Rat).